A 790-amino-acid polypeptide reads, in one-letter code: Tumor necrosis factor alpha-induced protein 3 (790 aa).

An N-acetylalanine modification is found at Ala-2. The segment at 58 to 300 is TRAF-binding; that stretch reads PQFREIIHKA…LTDPENEMKE (243 aa). The 172-residue stretch at 92–263 folds into the OTU domain; it reads LVALKTNGDG…SHHFVPLVTL (172 aa). Asp-100 is a catalytic residue. Residue Cys-103 is the Nucleophile of the active site. 3 interaction with ubiquitin regions span residues 157 to 159, 190 to 192, and 224 to 227; these read LCY, SLE, and FAPL. Catalysis depends on His-256, which acts as the Proton acceptor. The interaction with TNIP1 stretch occupies residues 369-775; that stretch reads AQNPMESSLP…ACDHFGNAKC (407 aa). Residues 381 to 416 form an A20-type 1 zinc finger; the sequence is SLMDVKCETPNCPFFMSVNTQPLCHECSERRQKNQN. The interaction with RIPK1 stretch occupies residues 386-453; it reads KCETPNCPFF…EPLAWNPEEP (68 aa). Residues Cys-387, Cys-392, Cys-404, and Cys-407 each contribute to the Zn(2+) site. The segment at 415–467 is disordered; the sequence is QNKLPKLNSKPGPEGLPGMALGASRGEAYEPLAWNPEEPTGGPHSAPPTAPSP. Residue Ser-459 is modified to Phosphoserine. 2 consecutive A20-type zinc fingers follow at residues 472–507 and 515–548; these read ETTA…LHAS and HLDP…AEAS. Zn(2+) contacts are provided by Cys-478, Cys-483, Cys-495, Cys-498, Cys-521, Cys-524, Cys-536, and Cys-539. A disordered region spans residues 550–580; that stretch reads SLSTSLPPSCHQRSKSDPSQLVRSPSPHSCH. A compositionally biased stretch (polar residues) spans 566–576; sequence DPSQLVRSPSP. The residue at position 575 (Ser-575) is a Phosphoserine. An A20-type 4 zinc finger spans residues 601–636; sequence RTGTSKCRKAGCMYFGTPENKGFCTLCFIEYRENKH. The required for proteasomal degradation of UBE2N and UBE2D3, TRAF6 deubiquitination, and TAX1BP1 interaction with UBE2N stretch occupies residues 605 to 655; that stretch reads SKCRKAGCMYFGTPENKGFCTLCFIEYRENKHLVAASGKASPTASRFQNTI. The sufficient for inhibitory activity of TNF-induced NF-kappa-B activity stretch occupies residues 606–790; it reads KCRKAGCMYF…ECFQFKQMYG (185 aa). 4 residues coordinate Zn(2+): Cys-607, Cys-612, Cys-624, and Cys-627. Ser-645 is subject to Phosphoserine. The segment at 651-686 adopts an A20-type 5 zinc-finger fold; the sequence is FQNTIPCLGRECGTLGSTMFEGYCQKCFIEAQNQRF. Residues Cys-657, Cys-662, Cys-674, and Cys-677 each coordinate Zn(2+). Positions 689 to 705 are enriched in basic and acidic residues; the sequence is AKRTEEQLRSSQRRDVP. Positions 689–712 are disordered; sequence AKRTEEQLRSSQRRDVPRTTQSTS. The interval 697 to 790 is required for lysosomal localization and for TRAF2 lysosomal degradation; sequence RSSQRRDVPR…ECFQFKQMYG (94 aa). 2 consecutive A20-type zinc fingers follow at residues 710–745 and 756–790; these read STSR…RMGP and DPPK…QMYG. Cys-716, Cys-721, Cys-733, Cys-736, Cys-762, Cys-767, Cys-779, and Cys-782 together coordinate Zn(2+).

The protein belongs to the peptidase C64 family. Homodimer. Interacts with TNIP1, TAX1BP1 and TRAF2. Interacts with RNF11, ITCH and TAX1BP1 only after TNF stimulation; these interaction are transient and they are lost after 1 hour of stimulation with TNF. Interacts with YWHAZ and YWHAH. Interacts with IKBKG; the interaction is induced by TNF stimulation and by polyubiquitin. Interacts with RIPK1. Interacts with UBE2N; the interaction requires TAX1BP1. Interacts with TRAF6. In terms of processing, proteolytically cleaved by MALT1 upon TCR stimulation; disrupts NF-kappa-B inhibitory function and results in increased IL-2 production. It is proposed that only a fraction of TNFAIP3 colocalized with TCR and CBM complex is cleaved, leaving the main TNFAIP3 pool intact.

It is found in the cytoplasm. Its subcellular location is the nucleus. The protein localises to the lysosome. The catalysed reaction is Thiol-dependent hydrolysis of ester, thioester, amide, peptide and isopeptide bonds formed by the C-terminal Gly of ubiquitin (a 76-residue protein attached to proteins as an intracellular targeting signal).. Ubiquitin-editing enzyme that contains both ubiquitin ligase and deubiquitinase activities. Involved in immune and inflammatory responses signaled by cytokines, such as TNF-alpha and IL-1 beta, or pathogens via Toll-like receptors (TLRs) through terminating NF-kappa-B activity. Essential component of a ubiquitin-editing protein complex, comprising also RNF11, ITCH and TAX1BP1, that ensures the transient nature of inflammatory signaling pathways. In cooperation with TAX1BP1 promotes disassembly of E2-E3 ubiquitin protein ligase complexes in IL-1R and TNFR-1 pathways; affected are at least E3 ligases TRAF6, TRAF2 and BIRC2, and E2 ubiquitin-conjugating enzymes UBE2N and UBE2D3. In cooperation with TAX1BP1 promotes ubiquitination of UBE2N and proteasomal degradation of UBE2N and UBE2D3. Upon TNF stimulation, deubiquitinates 'Lys-63'-polyubiquitin chains on RIPK1 and catalyzes the formation of 'Lys-48'-polyubiquitin chains. This leads to RIPK1 proteasomal degradation and consequently termination of the TNF- or LPS-mediated activation of NF-kappa-B. Deubiquitinates TRAF6 probably acting on 'Lys-63'-linked polyubiquitin. Upon T-cell receptor (TCR)-mediated T-cell activation, deubiquitinates 'Lys-63'-polyubiquitin chains on MALT1 thereby mediating disassociation of the CBM (CARD11:BCL10:MALT1) and IKK complexes and preventing sustained IKK activation. Deubiquitinates NEMO/IKBKG; the function is facilitated by TNIP1 and leads to inhibition of NF-kappa-B activation. Upon stimulation by bacterial peptidoglycans, probably deubiquitinates RIPK2. Can also inhibit I-kappa-B-kinase (IKK) through a non-catalytic mechanism which involves polyubiquitin; polyubiquitin promotes association with IKBKG and prevents IKK MAP3K7-mediated phosphorylation. Targets TRAF2 for lysosomal degradation. In vitro able to deubiquitinate 'Lys-11'-, 'Lys-48'- and 'Lys-63' polyubiquitin chains. Inhibitor of programmed cell death. Has a role in the function of the lymphoid system. Required for LPS-induced production of pro-inflammatory cytokines and IFN beta in LPS-tolerized macrophages. In Macaca fascicularis (Crab-eating macaque), this protein is Tumor necrosis factor alpha-induced protein 3 (TNFAIP3).